A 384-amino-acid chain; its full sequence is Acetylornithine aminotransferase (384 aa).

Residues G94–T95 and F121 each bind pyridoxal 5'-phosphate. N(2)-acetyl-L-ornithine is bound at residue R124. Pyridoxal 5'-phosphate is bound at residue D206–Q209. At K235 the chain carries N6-(pyridoxal phosphate)lysine. Position 263 (S263) interacts with N(2)-acetyl-L-ornithine. T264 is a binding site for pyridoxal 5'-phosphate.

Belongs to the class-III pyridoxal-phosphate-dependent aminotransferase family. ArgD subfamily. In terms of assembly, homodimer. Pyridoxal 5'-phosphate serves as cofactor.

It is found in the cytoplasm. It catalyses the reaction N(2)-acetyl-L-ornithine + 2-oxoglutarate = N-acetyl-L-glutamate 5-semialdehyde + L-glutamate. It functions in the pathway amino-acid biosynthesis; L-arginine biosynthesis; N(2)-acetyl-L-ornithine from L-glutamate: step 4/4. The sequence is that of Acetylornithine aminotransferase from Listeria innocua serovar 6a (strain ATCC BAA-680 / CLIP 11262).